A 264-amino-acid chain; its full sequence is CD320 antigen (264 aa).

The first 28 residues, 1–28 (MARCGAGRAAALGLVLRLLLGLRTGPEA), serve as a signal peptide directing secretion. An LDL-receptor class A 1 domain is found at 50–87 (SCPTDTFKCLTSGYCVPLSWRCDGDRDCSDGSDEEECR). 3 cysteine pairs are disulfide-bonded: Cys51-Cys64, Cys58-Cys77, and Cys71-Cys86. Ca(2+)-binding residues include Trp69, Asp72, Asp74, Asp76, Asp82, and Glu83. The N-linked (GlcNAc...) asparagine glycan is linked to Asn122. An LDL-receptor class A 2 domain is found at 127-164 (PCQEGELRCILDDVCIPHTWRCDGHPDCPDSSDELSCD). Cystine bridges form between Cys128–Cys141, Cys135–Cys154, and Cys148–Cys163. Residues Trp146, Asp149, His151, Asp153, Asp159, and Glu160 each coordinate Ca(2+). Asn195 is a glycosylation site (N-linked (GlcNAc...) asparagine). A helical membrane pass occupies residues 213 to 233 (VIAAAGVLSAILVSATILILL).

Interacts (via LDL-receptor class A domains) with TCN2.

The protein resides in the cell membrane. Its function is as follows. Receptor for transcobalamin saturated with cobalamin (TCbl). Plays an important role in cobalamin uptake. Plasma membrane protein that is expressed on follicular dendritic cells (FDC) and mediates interaction with germinal center B cells. Functions as a costimulator to promote B cell responses to antigenic stimuli; promotes B cell differentiation and proliferation. Germinal center-B (GC-B) cells differentiate into memory B-cells and plasma cells (PC) through interaction with T-cells and follicular dendritic cells (FDC). CD320 augments the proliferation of PC precursors generated by IL-10. In Rattus norvegicus (Rat), this protein is CD320 antigen (Cd320).